The primary structure comprises 199 residues: 7-methyl-GTP pyrophosphatase (199 aa).

Residue D72 is the Proton acceptor of the active site.

This sequence belongs to the Maf family. YceF subfamily. It depends on a divalent metal cation as a cofactor.

The protein localises to the cytoplasm. The enzyme catalyses N(7)-methyl-GTP + H2O = N(7)-methyl-GMP + diphosphate + H(+). Nucleoside triphosphate pyrophosphatase that hydrolyzes 7-methyl-GTP (m(7)GTP). May have a dual role in cell division arrest and in preventing the incorporation of modified nucleotides into cellular nucleic acids. The polypeptide is 7-methyl-GTP pyrophosphatase (Alkalilimnicola ehrlichii (strain ATCC BAA-1101 / DSM 17681 / MLHE-1)).